A 264-amino-acid chain; its full sequence is Thymidylate synthase (264 aa).

Arg21 serves as a coordination point for dUMP. Residue His51 coordinates (6R)-5,10-methylene-5,6,7,8-tetrahydrofolate. 126–127 (RR) provides a ligand contact to dUMP. Cys146 acts as the Nucleophile in catalysis. DUMP is bound by residues 166 to 169 (RSAD), Asn177, and 207 to 209 (HLY). Residue Asp169 coordinates (6R)-5,10-methylene-5,6,7,8-tetrahydrofolate. Ala263 contacts (6R)-5,10-methylene-5,6,7,8-tetrahydrofolate.

The protein belongs to the thymidylate synthase family. Bacterial-type ThyA subfamily. Homodimer.

Its subcellular location is the cytoplasm. It catalyses the reaction dUMP + (6R)-5,10-methylene-5,6,7,8-tetrahydrofolate = 7,8-dihydrofolate + dTMP. Its pathway is pyrimidine metabolism; dTTP biosynthesis. In terms of biological role, catalyzes the reductive methylation of 2'-deoxyuridine-5'-monophosphate (dUMP) to 2'-deoxythymidine-5'-monophosphate (dTMP) while utilizing 5,10-methylenetetrahydrofolate (mTHF) as the methyl donor and reductant in the reaction, yielding dihydrofolate (DHF) as a by-product. This enzymatic reaction provides an intracellular de novo source of dTMP, an essential precursor for DNA biosynthesis. This chain is Thymidylate synthase, found in Azoarcus sp. (strain BH72).